Here is a 390-residue protein sequence, read N- to C-terminus: UDP-galactose translocator (390 aa).

The segment at 1–24 is disordered; the sequence is MAAVGVGGSTAAAGAGAVSSGALE. A run of 10 helical transmembrane segments spans residues 3–23, 37–57, 65–85, 97–117, 140–160, 169–189, 200–220, 238–258, 269–289, and 315–335; these read AVGV…SGAL, YISL…IRYA, FFAT…CLLL, LVLF…KLAV, TFQV…VLML, WASL…QAGG, GAGL…GVYF, LGLF…GTAV, PAVW…AVVV, and LFGF…IGAV. Low complexity predominate over residues 9–22; sequence STAAAGAGAVSSGA. The tract at residues 356–390 is disordered; that stretch reads PCIHQQPPGQPPPPQLSSRGDLTTEPFLPKSVLVK.

This sequence belongs to the nucleotide-sugar transporter family. SLC35A subfamily. As to quaternary structure, interacts with SLC35A3; the interaction is reduced in the presence of SLC35A4. Found in a complex with SLC35A3 and SLC35A4.

Its subcellular location is the golgi apparatus membrane. It carries out the reaction UMP(out) + UDP-alpha-D-galactose(in) = UMP(in) + UDP-alpha-D-galactose(out). The enzyme catalyses UDP-N-acetyl-alpha-D-galactosamine(in) + UMP(out) = UDP-N-acetyl-alpha-D-galactosamine(out) + UMP(in). It catalyses the reaction UMP(out) + UDP-alpha-D-glucose(in) = UMP(in) + UDP-alpha-D-glucose(out). The catalysed reaction is UMP(out) + UDP-N-acetyl-alpha-D-glucosamine(in) = UMP(in) + UDP-N-acetyl-alpha-D-glucosamine(out). It carries out the reaction UDP-alpha-D-galactose(in) + AMP(out) = UDP-alpha-D-galactose(out) + AMP(in). The enzyme catalyses UDP-alpha-D-galactose(in) + CMP(out) = UDP-alpha-D-galactose(out) + CMP(in). It catalyses the reaction UDP-N-acetyl-alpha-D-galactosamine(out) + UDP-alpha-D-galactose(in) = UDP-N-acetyl-alpha-D-galactosamine(in) + UDP-alpha-D-galactose(out). The catalysed reaction is UDP-N-acetyl-alpha-D-glucosamine(out) + UDP-alpha-D-galactose(in) = UDP-N-acetyl-alpha-D-glucosamine(in) + UDP-alpha-D-galactose(out). It carries out the reaction UDP-alpha-D-galactose(in) + UDP-alpha-D-glucose(out) = UDP-alpha-D-galactose(out) + UDP-alpha-D-glucose(in). The enzyme catalyses UMP(out) + CMP(in) = UMP(in) + CMP(out). It catalyses the reaction UMP(out) + AMP(in) = UMP(in) + AMP(out). Functionally, transports uridine diphosphate galactose (UDP-galactose) from the cytosol into the Golgi apparatus. It functions as an antiporter that exchanges UDP-galactose for UMP. It is also able to exchange UDP-galactose for AMP and CMP, and to transport UDP-N-acetylgalactosamine (UDP-GalNAc) and other nucleotide sugars. As a provider of UDP-galactose to galactosyltransferases present in the Golgi apparatus, it is necessary for globotriaosylceramide/globoside (Gb3Cer) synthesis from lactosylceramide. The sequence is that of UDP-galactose translocator from Mus musculus (Mouse).